We begin with the raw amino-acid sequence, 70 residues long: DNA-directed RNA polymerases I, II, and III subunit rpabc5 (70 aa).

Zn(2+) contacts are provided by C7, C10, C44, and C45.

It belongs to the archaeal Rpo10/eukaryotic RPB10 RNA polymerase subunit family. Component of the RNA polymerase I (Pol I), RNA polymerase II (Pol II) and RNA polymerase III (Pol III) complexes.

Its subcellular location is the nucleus. In terms of biological role, DNA-dependent RNA polymerase catalyzes the transcription of DNA into RNA using the four ribonucleoside triphosphates as substrates. Common component of RNA polymerases I, II and III which synthesize ribosomal RNA precursors, mRNA precursors and many functional non-coding RNAs, and a small RNAs, such as 5S rRNA and tRNAs, respectively. Pol II is the central component of the basal RNA polymerase II transcription machinery. Pols are composed of mobile elements that move relative to each other. In Pol II, RBP10 is part of the core element with the central large cleft. This chain is DNA-directed RNA polymerases I, II, and III subunit rpabc5 (polr2l), found in Dictyostelium discoideum (Social amoeba).